A 255-amino-acid chain; its full sequence is Postacrosomal sheath WW domain-binding protein (255 aa).

One can recognise a GRAM domain in the interval 15–87; the sequence is LIPNGESLLK…DLITNLTVEQ (73 aa). 7 tandem repeats follow at residues 139-145, 146-152, 153-159, 160-166, 167-173, 174-180, and 202-208. The segment at 139 to 208 is 6 X 7 AA tandem repeat of Y-G-X-P-P-X-G; that stretch reads YGAPPAGYGA…PAGYGAPPLG (70 aa). A PPxY motif motif is present at residues 171-174; the sequence is PPGY. Disordered regions lie at residues 180-199 and 204-255; these read GYGA…RASP and APPL…ASSS.

Functionally, may play a role in meiotic resumption and pronuclear formation, mediated by a WW domain-signaling pathway during fertilization. This chain is Postacrosomal sheath WW domain-binding protein (WBP2NL), found in Macaca fascicularis (Crab-eating macaque).